A 110-amino-acid polypeptide reads, in one-letter code: Acylphosphatase (110 aa).

Residues 24–110 (RVRVYVSGRV…SGGARGFEVR (87 aa)) enclose the Acylphosphatase-like domain. Active-site residues include arginine 39 and asparagine 57.

The protein belongs to the acylphosphatase family.

It carries out the reaction an acyl phosphate + H2O = a carboxylate + phosphate + H(+). This is Acylphosphatase (acyP) from Rubrobacter xylanophilus (strain DSM 9941 / JCM 11954 / NBRC 16129 / PRD-1).